The sequence spans 108 residues: Integration host factor subunit alpha (108 aa).

It belongs to the bacterial histone-like protein family. Heterodimer of an alpha and a beta chain.

This protein is one of the two subunits of integration host factor, a specific DNA-binding protein that functions in genetic recombination as well as in transcriptional and translational control. In Methylorubrum populi (strain ATCC BAA-705 / NCIMB 13946 / BJ001) (Methylobacterium populi), this protein is Integration host factor subunit alpha.